A 429-amino-acid polypeptide reads, in one-letter code: Histidine--tRNA ligase (429 aa).

This sequence belongs to the class-II aminoacyl-tRNA synthetase family. As to quaternary structure, homodimer.

The protein resides in the cytoplasm. The catalysed reaction is tRNA(His) + L-histidine + ATP = L-histidyl-tRNA(His) + AMP + diphosphate + H(+). The sequence is that of Histidine--tRNA ligase from Prochlorococcus marinus subsp. pastoris (strain CCMP1986 / NIES-2087 / MED4).